The following is an 81-amino-acid chain: ATP synthase subunit c, chloroplastic (81 aa).

A run of 2 helical transmembrane segments spans residues Pro3–Gly23 and Leu57–Ala77.

This sequence belongs to the ATPase C chain family. In terms of assembly, F-type ATPases have 2 components, F(1) - the catalytic core - and F(0) - the membrane proton channel. F(1) has five subunits: alpha(3), beta(3), gamma(1), delta(1), epsilon(1). F(0) has four main subunits: a(1), b(1), b'(1) and c(10-14). The alpha and beta chains form an alternating ring which encloses part of the gamma chain. F(1) is attached to F(0) by a central stalk formed by the gamma and epsilon chains, while a peripheral stalk is formed by the delta, b and b' chains.

It localises to the plastid. The protein localises to the chloroplast thylakoid membrane. F(1)F(0) ATP synthase produces ATP from ADP in the presence of a proton or sodium gradient. F-type ATPases consist of two structural domains, F(1) containing the extramembraneous catalytic core and F(0) containing the membrane proton channel, linked together by a central stalk and a peripheral stalk. During catalysis, ATP synthesis in the catalytic domain of F(1) is coupled via a rotary mechanism of the central stalk subunits to proton translocation. In terms of biological role, key component of the F(0) channel; it plays a direct role in translocation across the membrane. A homomeric c-ring of between 10-14 subunits forms the central stalk rotor element with the F(1) delta and epsilon subunits. The chain is ATP synthase subunit c, chloroplastic from Acorus calamus var. americanus (American sweet flag).